Consider the following 282-residue polypeptide: N-methyltransferase gliN (282 aa).

Belongs to the methyltransferase superfamily. LaeA methyltransferase family.

It functions in the pathway mycotoxin biosynthesis. Functionally, N-methyltransferase; part of the gene cluster that mediates the biosynthesis of gliotoxin, a member of the epipolythiodioxopiperazine (ETP) class of toxins characterized by a disulfide bridged cyclic dipeptide. The first step in gliotoxin biosynthesis is the condensation of serine and phenylalanine to form the cyclo-L-phenylalanyl-L-serine diketopiperazine (DKP) by the NRPS gliP. GliP is also able to produce the DKP cyclo-L-tryptophanyl-L-serine, suggesting that the substrate specificity of the first adenylation (A) domain in gliP is sufficiently relaxed to accommodate both L-Phe and L-Trp. The cytochrome P450 monooxygenase gliC has been shown to catalyze the subsequent hydroxylation of the alpha-carbon of L-Phe in cyclo-L-phenylalanyl-L-serine whereas the second cytochrome P450 enzyme, gliF, is presumably involved in the modification of the DKP side chain. The glutathione S-transferase (GST) gliG then forms a bis-glutathionylated biosynthetic intermediate which is responsible for the sulfurization of gliotoxin. This bis-glutathionylated intermediate is subsequently processed by the gamma-glutamyl cyclotransferase gliK to remove both gamma-glutamyl moieties. Subsequent processing via gliI yields a biosynthetic intermediate, which is N-methylated via the N-methyltransferase gliN, before the gliotoxin oxidoreductase gliT-mediated disulfide bridge closure. GliN-mediated amide methylation confers stability to ETP, damping the spontaneous formation of tri- and tetrasulfides. Intracellular dithiol gliotoxin oxidized by gliT is subsequently effluxed by gliA. Gliotoxin contributes to pathogenesis during invasive aspergillosis. In macrophages and neutrophils, gliotoxin showed inhibition of various different cell functions including cytokine production, antigen presentation, phagocytosis, and production of reactive oxygen species. This chain is N-methyltransferase gliN, found in Aspergillus fumigatus (strain ATCC MYA-4609 / CBS 101355 / FGSC A1100 / Af293) (Neosartorya fumigata).